A 166-amino-acid polypeptide reads, in one-letter code: Flagellar assembly factor FliW (166 aa).

It belongs to the FliW family. In terms of assembly, interacts with translational regulator CsrA and flagellin(s).

The protein resides in the cytoplasm. In terms of biological role, acts as an anti-CsrA protein, binds CsrA and prevents it from repressing translation of its target genes, one of which is flagellin. Binds to flagellin and participates in the assembly of the flagellum. In Desulfovibrio desulfuricans (strain ATCC 27774 / DSM 6949 / MB), this protein is Flagellar assembly factor FliW.